The sequence spans 124 residues: uncharacterized protein (124 aa).

The helical transmembrane segment at 83–100 threads the bilayer; that stretch reads VTCFSLYTICYRIVLIWA.

Its subcellular location is the membrane. This is an uncharacterized protein from Saccharomyces cerevisiae (strain ATCC 204508 / S288c) (Baker's yeast).